Here is a 288-residue protein sequence, read N- to C-terminus: MKKIKKAIIPAAGLGTRFLPATKAMPKEMLPILDKPTIQYIVEEAARAGIEDIIIVTGRHKRAIEDHFDSQKELEMVLKEKGKSELLEKVQYSTELANIFYVRQKEQKGLGHAISSARQFIGNEPFAVLLGDDIVESEVPAVKQLIDVYEETGHSVIGVQEVPEADTHRYGIIDPLTKNGRQYEVKKFVEKPAQGTAPSNLAIMGRYVLTPEIFDYLKTQKEGAGNEIQLTDAIERMNNDNQVYAYDFEGERYDVGEKLGFVKTTIEYALKDDSMREELTRFIKELGL.

This sequence belongs to the UDPGP type 2 family.

It catalyses the reaction alpha-D-glucose 1-phosphate + UTP + H(+) = UDP-alpha-D-glucose + diphosphate. The protein operates within glycolipid metabolism; diglucosyl-diacylglycerol biosynthesis. Its function is as follows. Catalyzes the formation of UDP-glucose from glucose-1-phosphate and UTP. This is an intermediate step in the biosynthesis of diglucosyl-diacylglycerol (Glc2-DAG), i.e. the predominant glycolipid found in the S.aureus membrane, which is also used as a membrane anchor for lipoteichoic acid (LTA). This chain is UTP--glucose-1-phosphate uridylyltransferase (gtaB), found in Staphylococcus aureus (strain MSSA476).